The primary structure comprises 189 residues: uncharacterized protein (189 aa).

4 consecutive transmembrane segments (helical) span residues 20–40, 46–66, 100–120, and 126–146; these read FILG…YLTF, TIII…IILI, VLLF…SLNI, and FVLY…GDVI.

This sequence to M.jannaschii MJ0795.1 and MJ1249.1.

It localises to the cell membrane. This is an uncharacterized protein from Methanocaldococcus jannaschii (strain ATCC 43067 / DSM 2661 / JAL-1 / JCM 10045 / NBRC 100440) (Methanococcus jannaschii).